Here is a 211-residue protein sequence, read N- to C-terminus: Interleukin-6 (211 aa).

An N-terminal signal peptide occupies residues 1–29; the sequence is MNSLSTSAFSPVAFSLGLLLVMATAFPTP. An intrachain disulfide couples Cys-71 to Cys-77. Ser-80 is modified (phosphoserine). A disulfide bridge connects residues Cys-100 and Cys-110.

This sequence belongs to the IL-6 superfamily. As to quaternary structure, component of a hexamer of two molecules each of IL6, IL6R and IL6ST; first binds to IL6R to associate with the signaling subunit IL6ST. Interacts with IL6R (via the N-terminal ectodomain); this interaction may be affected by IL6R-binding with SORL1, hence decreasing IL6 cis signaling. Interacts with SORL1 (via the N-terminal ectodomain); this interaction leads to IL6 internalization and lysosomal degradation. May form a trimeric complex with the soluble SORL1 ectodomain and soluble IL6R receptor; this interaction might stabilize circulating IL6, hence promoting IL6 trans signaling.

The protein resides in the secreted. Its function is as follows. Cytokine with a wide variety of biological functions in immunity, tissue regeneration, and metabolism. Binds to IL6R, then the complex associates to the signaling subunit IL6ST/gp130 to trigger the intracellular IL6-signaling pathway. The interaction with the membrane-bound IL6R and IL6ST stimulates 'classic signaling', whereas the binding of IL6 and soluble IL6R to IL6ST stimulates 'trans-signaling'. Alternatively, 'cluster signaling' occurs when membrane-bound IL6:IL6R complexes on transmitter cells activate IL6ST receptors on neighboring receiver cells. In terms of biological role, IL6 is a potent inducer of the acute phase response. Rapid production of IL6 contributes to host defense during infection and tissue injury, but excessive IL6 synthesis is involved in disease pathology. In the innate immune response, is synthesized by myeloid cells, such as macrophages and dendritic cells, upon recognition of pathogens through toll-like receptors (TLRs) at the site of infection or tissue injury. In the adaptive immune response, is required for the differentiation of B cells into immunoglobulin-secreting cells. Plays a major role in the differentiation of CD4(+) T cell subsets. Essential factor for the development of T follicular helper (Tfh) cells that are required for the induction of germinal-center formation. Required to drive naive CD4(+) T cells to the Th17 lineage. Also required for proliferation of myeloma cells and the survival of plasmablast cells. Functionally, acts as an essential factor in bone homeostasis and on vessels directly or indirectly by induction of VEGF, resulting in increased angiogenesis activity and vascular permeability. Induces, through 'trans-signaling' and synergistically with IL1B and TNF, the production of VEGF. Involved in metabolic controls, is discharged into the bloodstream after muscle contraction increasing lipolysis and improving insulin resistance. 'Trans-signaling' in central nervous system also regulates energy and glucose homeostasis. Mediates, through GLP-1, crosstalk between insulin-sensitive tissues, intestinal L cells and pancreatic islets to adapt to changes in insulin demand. Also acts as a myokine. Plays a protective role during liver injury, being required for maintenance of tissue regeneration. Also has a pivotal role in iron metabolism by regulating HAMP/hepcidin expression upon inflammation or bacterial infection. Through activation of IL6ST-YAP-NOTCH pathway, induces inflammation-induced epithelial regeneration. This chain is Interleukin-6 (IL6), found in Camelus bactrianus (Bactrian camel).